The following is a 336-amino-acid chain: Methionine import ATP-binding protein MetN (336 aa).

An ABC transporter domain is found at Ile-2–Gly-254. ATP is bound at residue Gly-34 to Ser-41.

The protein belongs to the ABC transporter superfamily. Methionine importer (TC 3.A.1.24) family. The complex is composed of two ATP-binding proteins (MetN), two transmembrane proteins (MetI) and a solute-binding protein (MetQ).

It localises to the cell inner membrane. The catalysed reaction is L-methionine(out) + ATP + H2O = L-methionine(in) + ADP + phosphate + H(+). It carries out the reaction D-methionine(out) + ATP + H2O = D-methionine(in) + ADP + phosphate + H(+). Part of the ABC transporter complex MetNIQ involved in methionine import. Responsible for energy coupling to the transport system. The sequence is that of Methionine import ATP-binding protein MetN from Campylobacter jejuni subsp. jejuni serotype O:2 (strain ATCC 700819 / NCTC 11168).